Consider the following 470-residue polypeptide: Tigger transposable element-derived protein 3 (470 aa).

In terms of domain architecture, HTH psq-type spans Leu3 to Leu55. DNA-binding regions (H-T-H motif) lie at residues Gln31–Asn51 and Pro100–Arg130. Residues Glu67–Thr137 form the HTH CENPB-type domain. Residues Phe167–Phe360 form the DDE-1 domain. Residues Asp402–Glu421 are compositionally biased toward basic and acidic residues. Residues Asp402–Pro426 are disordered.

Belongs to the tigger transposable element derived protein family.

It localises to the nucleus. The polypeptide is Tigger transposable element-derived protein 3 (Tigd3) (Mus musculus (Mouse)).